The chain runs to 825 residues: Phenylalanine--tRNA ligase beta subunit (825 aa).

Positions 39 to 154 constitute a tRNA-binding domain; sequence RTWADGVVLG…EAHPLGSDVR (116 aa). The B5 domain occupies 411-506; sequence PLERTLKLRL…RLYGYDRFSE (96 aa). Residues Asp484, Asp490, Glu493, and Glu494 each coordinate Mg(2+). One can recognise an FDX-ACB domain in the interval 731–824; the sequence is SPFPAADRDI…LATQFPVTLR (94 aa).

Belongs to the phenylalanyl-tRNA synthetase beta subunit family. Type 1 subfamily. Tetramer of two alpha and two beta subunits. It depends on Mg(2+) as a cofactor.

The protein localises to the cytoplasm. The enzyme catalyses tRNA(Phe) + L-phenylalanine + ATP = L-phenylalanyl-tRNA(Phe) + AMP + diphosphate + H(+). The polypeptide is Phenylalanine--tRNA ligase beta subunit (Synechococcus sp. (strain JA-2-3B'a(2-13)) (Cyanobacteria bacterium Yellowstone B-Prime)).